The primary structure comprises 85 residues: U4-theraphotoxin-Hhn1a (85 aa).

Positions 1–22 are cleaved as a signal peptide; that stretch reads MKMTLIAILTCAAVLVLHTTAA. Positions 23-48 are excised as a propeptide; that stretch reads EELEAESQLMEVGMPDTELEAVDEER. Cystine bridges form between Cys-52–Cys-66, Cys-56–Cys-77, and Cys-71–Cys-82.

Belongs to the neurotoxin 12 (Hwtx-2) family. 02 (Hwtx-2) subfamily. Monomer. As to expression, expressed by the venom gland.

The protein localises to the secreted. In terms of biological role, neurotoxin active on both insects and mammals. The protein is U4-theraphotoxin-Hhn1a of Cyriopagopus hainanus (Chinese bird spider).